The following is a 515-amino-acid chain: Protein aaim-1 (515 aa).

A signal peptide spans 1 to 16 (MRLLFFFSILYTASLC). N-linked (GlcNAc...) asparagine glycans are attached at residues N46 and N127. Residues 248–267 (RRTDPNSKFKPRPTTSQSNG) form a disordered region. A glycan (N-linked (GlcNAc...) asparagine) is linked at N447.

Expressed in the terminal bulb of the pharynx and the posterior of the intestine (at protein level). Expressed by intestinal cells and secreted into the intestinal lumen (at protein level).

Its subcellular location is the secreted. Its function is as follows. Plays a role in promoting resistance to bacterial pathogens such as P.aeruginosa by inhibiting bacterial intestinal colonization. In terms of biological role, (Microbial infection) Promotes infection by microsporidian pathogens such as N.parisii in the early larval stages of development. Involved in ensuring the proper orientation and location of the spore proteins of N.parisii during intestinal cell invasion. The chain is Protein aaim-1 from Caenorhabditis elegans.